A 335-amino-acid chain; its full sequence is Phosphatidylinositol:ceramide inositolphosphotransferase (335 aa).

Topologically, residues 1–21 (MVLMGPHSALRLLPLKTQAIR) are cytoplasmic. Residues 22-42 (FVLLLLLSVLILAVALLVTNA) form a helical membrane-spanning segment. Topologically, residues 43 to 72 (RMPDPKVVRPLPDIGFEVFPKVGWLEHLTD) are extracellular. The helical transmembrane segment at 73–93 (VCIFILNFLSLLVVFKLYLLH) threads the bilayer. Topologically, residues 94 to 98 (RQNEG) are cytoplasmic. Residues 99–119 (LDELQPFSCCPLIGKIIFGVW) form a helical membrane-spanning segment. The Extracellular segment spans residues 120 to 139 (DSGRQSGIEKRDAHLIAWIR). A helical membrane pass occupies residues 140–160 (YFTTYFIVLLFRAIVVVMTSY). Residues 161 to 179 (PATDNHCQNPMKITNPVKN) are Cytoplasmic-facing. The helical transmembrane segment at 180 to 200 (VIMTLVTFGSGSIHCGDLMFS) threads the bilayer. Residues 201–203 (GHT) lie on the Extracellular side of the membrane. Residue histidine 202 is part of the active site. Residues 204 to 224 (VSITLSLLVQWIYGSMLHWVF) form a helical membrane-spanning segment. The Cytoplasmic portion of the chain corresponds to 225–335 (RPASVLLVLL…GPACGNFGHW (111 aa)). Catalysis depends on residues histidine 245 and aspartate 249.

The protein belongs to the sphingomyelin synthase family.

Its subcellular location is the membrane. Its function is as follows. Bidirectional lipid inositolphosphotransferase capable of converting phosphatidylinositol (PI) and ceramide to inositol-phosphorylceramide (IPC) and diacylglycerol (DAG) and vice versa. Direction is dependent on the relative concentrations of DAG and ceramide as phosphoinositol acceptors. Essential for viability of the pathogenic bloodstream stage of this human protozoan parasite and, consequently, can be considered as potential drug target. This Trypanosoma cruzi (strain CL Brener) protein is Phosphatidylinositol:ceramide inositolphosphotransferase.